The sequence spans 351 residues: Beta-1,4-xylosyltransferase IRX9 (351 aa).

Residues 1 to 16 are Cytoplasmic-facing; that stretch reads MGSLERSKKKAQVWKK. Residues 17 to 36 form a helical; Signal-anchor for type II membrane protein membrane-spanning segment; it reads AVIHFSLCFVMGFFTGFAPA. Residues 37–351 lie on the Lumenal side of the membrane; sequence GKASFFSNFE…KFPTRTRLST (315 aa). N-linked (GlcNAc...) asparagine glycosylation is found at Asn-64 and Asn-74. Residues 80 to 107 form a disordered region; that stretch reads SQSQAPAPAESREAEGETRSLSEKEDEN. The segment covering 89 to 107 has biased composition (basic and acidic residues); that stretch reads ESREAEGETRSLSEKEDEN. 2 N-linked (GlcNAc...) asparagine glycosylation sites follow: Asn-271 and Asn-287.

This sequence belongs to the glycosyltransferase 43 family. As to expression, expressed in developing interfascicular fibers, primary and secondary xylem in stems and developing secondary xylem in roots.

The protein resides in the golgi apparatus membrane. The enzyme catalyses [(1-&gt;4)-beta-D-xylan](n) + UDP-alpha-D-xylose = [(1-&gt;4)-beta-D-xylan](n+1) + UDP + H(+). Its function is as follows. Involved in the synthesis of the hemicellulose glucuronoxylan, a major component of secondary cell walls. Xylan xylosyltransferase that acts cooperatively with IRX14 to achieve the successive addition of xylosyl residues during xylan backbone elongation. The protein is Beta-1,4-xylosyltransferase IRX9 of Arabidopsis thaliana (Mouse-ear cress).